A 64-amino-acid polypeptide reads, in one-letter code: Large ribosomal subunit protein bL35 (64 aa).

Belongs to the bacterial ribosomal protein bL35 family.

This chain is Large ribosomal subunit protein bL35, found in Chlorobium limicola (strain DSM 245 / NBRC 103803 / 6330).